Here is a 186-residue protein sequence, read N- to C-terminus: Large ribosomal subunit protein eL18 (186 aa).

This sequence belongs to the eukaryotic ribosomal protein eL18 family. Component of the large ribosomal subunit. Mature ribosomes consist of a small (40S) and a large (60S) subunit. The 40S subunit contains about 32 different proteins and 1 molecule of RNA (18S). The 60S subunit contains 45 different proteins and 3 molecules of RNA (25S, 5.8S and 5S).

Its subcellular location is the cytoplasm. Its function is as follows. Component of the ribosome, a large ribonucleoprotein complex responsible for the synthesis of proteins in the cell. The small ribosomal subunit (SSU) binds messenger RNAs (mRNAs) and translates the encoded message by selecting cognate aminoacyl-transfer RNA (tRNA) molecules. The large subunit (LSU) contains the ribosomal catalytic site termed the peptidyl transferase center (PTC), which catalyzes the formation of peptide bonds, thereby polymerizing the amino acids delivered by tRNAs into a polypeptide chain. The nascent polypeptides leave the ribosome through a tunnel in the LSU and interact with protein factors that function in enzymatic processing, targeting, and the membrane insertion of nascent chains at the exit of the ribosomal tunnel. This Candida albicans (strain SC5314 / ATCC MYA-2876) (Yeast) protein is Large ribosomal subunit protein eL18.